Consider the following 88-residue polypeptide: Stannin (88 aa).

Residues 1–10 (MSIMDHSPTT) are Mitochondrial intermembrane-facing. Residues 11-31 (GVVTVIVILIAIAALGALILG) traverse the membrane as a helical segment. Topologically, residues 32-88 (CWCYLRLQRISQSEDEESIVGDGETKEPFLLVQYSAKGPCVERKAKLMTANSPEVHG) are cytoplasmic. A phosphoserine mark is found at Ser49 and Ser83.

This sequence belongs to the stannin family. As to quaternary structure, monomer.

The protein localises to the mitochondrion outer membrane. Plays a role in the toxic effects of organotins. Plays a role in endosomal maturation. The protein is Stannin (Snn) of Mus musculus (Mouse).